Consider the following 473-residue polypeptide: Benzoyl-CoA oxygenase component B (473 aa).

Belongs to the benzoyl-CoA oxygenase component B family. In terms of assembly, monomer. The subunit composition of the active BoxA/BoxB protein complex is not known. The cofactor is Fe cation.

The enzyme catalyses benzoyl-CoA + NADPH + O2 + H(+) = 2,3-epoxy-2,3-dihydrobenzoyl-CoA + NADP(+) + H2O. Functionally, the BoxA/BoxB complex catalyzes the aerobic reduction/oxygenation of the aromatic ring of benzoyl-CoA to form 2,3-epoxy-2,3-dihydrobenzoyl-CoA. BoxB acts as the benzoyl-CoA oxygenase, after being reduced by the reductase component BoxA. BoxAB does not act on NADH or benzoate. The protein is Benzoyl-CoA oxygenase component B (boxB) of Aromatoleum evansii (Azoarcus evansii).